A 409-amino-acid chain; its full sequence is Elongation factor Tu, chloroplastic (409 aa).

A tr-type G domain is found at 10–214 (KPHVNIGTIG…TVDAYIPTPE (205 aa)). Residues 19 to 26 (GHVDHGKT) are G1. Position 19–26 (19–26 (GHVDHGKT)) interacts with GTP. Mg(2+) is bound at residue Thr-26. A G2 region spans residues 60-64 (GITIN). The tract at residues 81–84 (DCPG) is G3. GTP is bound by residues 81 to 85 (DCPGH) and 136 to 139 (NKED). The G4 stretch occupies residues 136 to 139 (NKED). The segment at 174-176 (SAL) is G5.

This sequence belongs to the TRAFAC class translation factor GTPase superfamily. Classic translation factor GTPase family. EF-Tu/EF-1A subfamily.

The protein resides in the plastid. Its subcellular location is the chloroplast. The catalysed reaction is GTP + H2O = GDP + phosphate + H(+). In terms of biological role, GTP hydrolase that promotes the GTP-dependent binding of aminoacyl-tRNA to the A-site of ribosomes during protein biosynthesis. The protein is Elongation factor Tu, chloroplastic (tufA) of Pleurastrum terricola (Filamentous green alga).